We begin with the raw amino-acid sequence, 82 residues long: uncharacterized protein (82 aa).

This is an uncharacterized protein from Ictaluridae (bullhead catfishes).